Here is a 304-residue protein sequence, read N- to C-terminus: HTH-type transcriptional regulator TtuA (304 aa).

An HTH lysR-type domain is found at 1–58 (MELEQLKCFVAAAEELHFGRAAQKMGILPASLGRHLRLLEESLGTRLMSRTTRSVALT). A DNA-binding region (H-T-H motif) is located at residues 18–37 (FGRAAQKMGILPASLGRHLR).

This sequence belongs to the LysR transcriptional regulatory family.

Functionally, transcriptional regulator of the ttuABCDE tartrate utilization operon. The sequence is that of HTH-type transcriptional regulator TtuA (ttuA) from Agrobacterium vitis (Rhizobium vitis).